The sequence spans 437 residues: Replication factor C large subunit (437 aa).

Residue 48–55 coordinates ATP; sequence GPPGVGKT. Residues 410-437 form a disordered region; it reads TQASKPTSEEKAEKSKKYYPKRSSSRKT. Positions 416 to 425 are enriched in basic and acidic residues; it reads TSEEKAEKSK. The segment covering 426-437 has biased composition (basic residues); the sequence is KYYPKRSSSRKT.

The protein belongs to the activator 1 small subunits family. RfcL subfamily. In terms of assembly, heteromultimer composed of small subunits (RfcS) and large subunits (RfcL).

Its function is as follows. Part of the RFC clamp loader complex which loads the PCNA sliding clamp onto DNA. This chain is Replication factor C large subunit, found in Sulfolobus acidocaldarius (strain ATCC 33909 / DSM 639 / JCM 8929 / NBRC 15157 / NCIMB 11770).